Consider the following 61-residue polypeptide: Metallothionein-2 (61 aa).

Position 1 is an N-acetylmethionine (Met-1). The interval Met-1–Cys-29 is beta. A divalent metal cation is bound by residues Cys-5, Cys-7, Cys-13, Cys-15, Cys-19, Cys-21, Cys-24, Cys-26, Cys-29, Cys-33, Cys-34, Cys-36, Cys-37, Cys-41, Cys-44, Cys-48, Cys-50, and Cys-57. Residues Lys-30–Ala-61 form an alpha region. Ser-58 is subject to Phosphoserine. A divalent metal cation-binding residues include Cys-59 and Cys-60.

It belongs to the metallothionein superfamily. Type 1 family.

Functionally, metallothioneins have a high content of cysteine residues that bind various heavy metals; these proteins are transcriptionally regulated by both heavy metals and glucocorticoids. This chain is Metallothionein-2 (MT2), found in Mesocricetus auratus (Golden hamster).